A 968-amino-acid polypeptide reads, in one-letter code: RNA polymerase-associated protein RapA (968 aa).

In terms of domain architecture, Helicase ATP-binding spans Glu163–Asp332. ATP is bound at residue Asp176 to Thr183. The DEAH box signature appears at Asp278–His281. The 165-residue stretch at Arg491–Leu655 folds into the Helicase C-terminal domain.

Belongs to the SNF2/RAD54 helicase family. RapA subfamily. In terms of assembly, interacts with the RNAP. Has a higher affinity for the core RNAP than for the holoenzyme. Its ATPase activity is stimulated by binding to RNAP.

Its function is as follows. Transcription regulator that activates transcription by stimulating RNA polymerase (RNAP) recycling in case of stress conditions such as supercoiled DNA or high salt concentrations. Probably acts by releasing the RNAP, when it is trapped or immobilized on tightly supercoiled DNA. Does not activate transcription on linear DNA. Probably not involved in DNA repair. In Shewanella baltica (strain OS155 / ATCC BAA-1091), this protein is RNA polymerase-associated protein RapA.